A 443-amino-acid chain; its full sequence is Adenylosuccinate synthetase (443 aa).

GTP contacts are provided by residues 12 to 18 (GDEGKGK) and 40 to 42 (GHT). Catalysis depends on Asp-13, which acts as the Proton acceptor. Mg(2+) is bound by residues Asp-13 and Gly-40. IMP contacts are provided by residues 13–16 (DEGK), 38–41 (NAGH), Thr-128, Arg-142, Gln-223, Thr-238, and Arg-302. His-41 acts as the Proton donor in catalysis. 298 to 304 (TTTGRRR) is a substrate binding site. GTP is bound by residues Arg-304, 330–332 (KLD), and 412–414 (SLG).

The protein belongs to the adenylosuccinate synthetase family. Homodimer. Mg(2+) serves as cofactor.

The protein localises to the cytoplasm. The enzyme catalyses IMP + L-aspartate + GTP = N(6)-(1,2-dicarboxyethyl)-AMP + GDP + phosphate + 2 H(+). The protein operates within purine metabolism; AMP biosynthesis via de novo pathway; AMP from IMP: step 1/2. Functionally, plays an important role in the de novo pathway of purine nucleotide biosynthesis. Catalyzes the first committed step in the biosynthesis of AMP from IMP. The polypeptide is Adenylosuccinate synthetase (Picosynechococcus sp. (strain ATCC 27264 / PCC 7002 / PR-6) (Agmenellum quadruplicatum)).